A 118-amino-acid chain; its full sequence is Putative pterin-4-alpha-carbinolamine dehydratase (118 aa).

The protein belongs to the pterin-4-alpha-carbinolamine dehydratase family.

The enzyme catalyses (4aS,6R)-4a-hydroxy-L-erythro-5,6,7,8-tetrahydrobiopterin = (6R)-L-erythro-6,7-dihydrobiopterin + H2O. This chain is Putative pterin-4-alpha-carbinolamine dehydratase, found in Stutzerimonas stutzeri (strain A1501) (Pseudomonas stutzeri).